The primary structure comprises 226 residues: 3-dehydroquinate dehydratase (226 aa).

Residues glutamate 33 to arginine 35 and arginine 65 each bind 3-dehydroquinate. Histidine 120 (proton donor/acceptor) is an active-site residue. The Schiff-base intermediate with substrate role is filled by lysine 147. Residues arginine 186, serine 205, and glutamine 209 each contribute to the 3-dehydroquinate site.

Belongs to the type-I 3-dehydroquinase family. Homodimer.

It carries out the reaction 3-dehydroquinate = 3-dehydroshikimate + H2O. It functions in the pathway metabolic intermediate biosynthesis; chorismate biosynthesis; chorismate from D-erythrose 4-phosphate and phosphoenolpyruvate: step 3/7. Its function is as follows. Involved in the third step of the chorismate pathway, which leads to the biosynthesis of aromatic amino acids. Catalyzes the cis-dehydration of 3-dehydroquinate (DHQ) and introduces the first double bond of the aromatic ring to yield 3-dehydroshikimate. This chain is 3-dehydroquinate dehydratase, found in Thermodesulfovibrio yellowstonii (strain ATCC 51303 / DSM 11347 / YP87).